The primary structure comprises 418 residues: Probable serine hydroxymethyltransferase (418 aa).

Residues L118 and 122-124 contribute to the (6S)-5,6,7,8-tetrahydrofolate site; that span reads GHL. At K226 the chain carries N6-(pyridoxal phosphate)lysine. 351–353 is a (6S)-5,6,7,8-tetrahydrofolate binding site; the sequence is SPF.

This sequence belongs to the SHMT family. Homodimer. Pyridoxal 5'-phosphate is required as a cofactor.

The protein resides in the cytoplasm. It carries out the reaction (6R)-5,10-methylene-5,6,7,8-tetrahydrofolate + glycine + H2O = (6S)-5,6,7,8-tetrahydrofolate + L-serine. It functions in the pathway one-carbon metabolism; tetrahydrofolate interconversion. Catalyzes the reversible interconversion of serine and glycine with tetrahydrofolate (THF) serving as the one-carbon carrier. This reaction serves as the major source of one-carbon groups required for the biosynthesis of purines, thymidylate, methionine, and other important biomolecules. This chain is Probable serine hydroxymethyltransferase, found in Mesomycoplasma hyopneumoniae (strain 7448) (Mycoplasma hyopneumoniae).